The chain runs to 622 residues: MEPPDARAGLLWLTFLLSGYSGAQAELHVSVPPRVEVMRGEQVALDCTPREHPEHYVLEWFLVDGTGARHRLASVEPQGSEFLGTVHSLGRVPPYEVDSRGRLVIAKVQVGDGRDYVCVVKAGAAGTSEATSSVRVFATPEDTEVSPNKGTLSVMDQFAQEIATCSSNNGNPVPRITWYRNGQRLEVPMEVNQKGYITIRTVREASGLYSLTSTLYLRLHKDDRDANFHCAAHYDLPSGQHGRLDSHTFRLTLHYPTEHVEFWVGSPSTTEGWVREGDAVQLLCQGDGSPSPEYSFFRQQGTQEEQLNVNLKGNLTLERVHRNQSGIYGCRVEDYDADEEVQLVKKLKLHVAYLDPLELSVPEELFVFLNSSSTVVNCSARGLPTPTVRWTKDSVTLADGPMLSLQSVTFDSAGTYTCEASTPTVPLLSRTQSFQLIVQGAPELKPNEIMPKSGNSWTEGDEVMLTCSARGFPEPKLTWSQRGDTPAEPPFEGRGWKSSSLMVKVTSALSREGVSCEASNIHGKKGHVFHFGSVAPQTAQAGVAVMAVAVSVGLLLLVVAAFYCMRRKGRPGCCRRAEKGAPPAREPELSHSGSERPEHTGLLMGGPSGGGRGGSGGFGDEC.

The signal sequence occupies residues 1 to 25 (MEPPDARAGLLWLTFLLSGYSGAQA). Ig-like V-type domains follow at residues 26–135 (ELHV…SSVR) and 140–250 (PEDT…HTFR). The Extracellular portion of the chain corresponds to 26–541 (ELHVSVPPRV…GSVAPQTAQA (516 aa)). 3 cysteine pairs are disulfide-bonded: C47-C118, C165-C230, and C284-C330. 3 consecutive Ig-like C2-type domains span residues 267 to 342 (PSTT…EEVQ), 356 to 435 (PLEL…QSFQ), and 442 to 532 (PELK…FHFG). N314, N323, N370, and N377 each carry an N-linked (GlcNAc...) asparagine glycan. Disulfide bonds link C378–C418 and C467–C516. The chain crosses the membrane as a helical span at residues 542–562 (GVAVMAVAVSVGLLLLVVAAF). The Cytoplasmic segment spans residues 563 to 622 (YCMRRKGRPGCCRRAEKGAPPAREPELSHSGSERPEHTGLLMGGPSGGGRGGSGGFGDEC). Positions 574–622 (CRRAEKGAPPAREPELSHSGSERPEHTGLLMGGPSGGGRGGSGGFGDEC) are disordered. Residues 575 to 599 (RRAEKGAPPAREPELSHSGSERPEH) show a composition bias toward basic and acidic residues. Residues S590, S592, S594, and S615 each carry the phosphoserine modification. Over residues 603 to 622 (LMGGPSGGGRGGSGGFGDEC) the composition is skewed to gly residues.

In terms of assembly, homodimer. Interacts with ITGA4:ITGB1. Interacts with spectrins SPTA1 and SPTB1. In terms of processing, epinephrine-stimulated phosphorylation of Ser-615 by PKA enhances adhesion to laminin. Ser-615 can also be phosphorylated by AKT1.

The protein resides in the cell membrane. In terms of biological role, transmembrane glycoprotein that functions as both a receptor and an adhesion molecule playing a crucial role in cell adhesion, motility, migration and invasion. Extracellular domain enables binding to extracellular matrix proteins, such as laminin, integrin and other ligands while its intracellular domain interacts with cytoskeletal proteins like hemoglobin, facilitating cell signal transduction. Serves as a receptor for laminin alpha-5/LAMA5 to promote cell adhesion. Mechanistically, JAK2 induces BCAM phosphorylation and activates its adhesion to laminin by stimulating a Rap1/AKT signaling pathway in the absence of EPOR. In Mus musculus (Mouse), this protein is Basal cell adhesion molecule (Bcam).